We begin with the raw amino-acid sequence, 279 residues long: Protein NipSnap homolog 1 (279 aa).

The protein belongs to the NipSnap family.

It localises to the mitochondrion matrix. Protein involved in mitophagy. Accumulates on the mitochondria surface in response to mitochondrial depolarization and acts as a 'eat me' signal by recruiting proteins involved in selective autophagy. The sequence is that of Protein NipSnap homolog 1 from Danio rerio (Zebrafish).